Here is a 427-residue protein sequence, read N- to C-terminus: Phosphoglucosamine mutase (427 aa).

Ser94 (phosphoserine intermediate) is an active-site residue. Ser94, Asp228, Asp230, and Asp232 together coordinate Mg(2+). Ser94 carries the phosphoserine modification.

Belongs to the phosphohexose mutase family. The cofactor is Mg(2+). In terms of processing, activated by phosphorylation.

The catalysed reaction is alpha-D-glucosamine 1-phosphate = D-glucosamine 6-phosphate. Its function is as follows. Catalyzes the conversion of glucosamine-6-phosphate to glucosamine-1-phosphate. The sequence is that of Phosphoglucosamine mutase from Thermotoga sp. (strain RQ2).